We begin with the raw amino-acid sequence, 305 residues long: Glycine--tRNA ligase alpha subunit (305 aa).

It belongs to the class-II aminoacyl-tRNA synthetase family. In terms of assembly, tetramer of two alpha and two beta subunits.

The protein resides in the cytoplasm. The catalysed reaction is tRNA(Gly) + glycine + ATP = glycyl-tRNA(Gly) + AMP + diphosphate. This is Glycine--tRNA ligase alpha subunit from Streptococcus mutans serotype c (strain ATCC 700610 / UA159).